The primary structure comprises 284 residues: L-ribulose-5-phosphate 3-epimerase UlaE (284 aa).

Belongs to the L-ribulose-5-phosphate 3-epimerase family.

The catalysed reaction is L-ribulose 5-phosphate = L-xylulose 5-phosphate. It functions in the pathway cofactor degradation; L-ascorbate degradation; D-xylulose 5-phosphate from L-ascorbate: step 3/4. Its function is as follows. Catalyzes the isomerization of L-xylulose-5-phosphate to L-ribulose-5-phosphate. Is involved in the anaerobic L-ascorbate utilization. In Salmonella heidelberg (strain SL476), this protein is L-ribulose-5-phosphate 3-epimerase UlaE.